A 166-amino-acid polypeptide reads, in one-letter code: Small ribosomal subunit protein bS18m (166 aa).

Residues 1–31 constitute a mitochondrion transit peptide; that stretch reads MLGRRIFSPAPNRGFILCNLIQSNNSTRRGF. The segment at 29–48 is disordered; the sequence is RGFSDNRKFNERNSEASSNV. A compositionally biased stretch (basic and acidic residues) spans 30 to 42; sequence GFSDNRKFNERNS.

It belongs to the bacterial ribosomal protein bS18 family. Component of the mitochondrial small ribosomal subunit (mt-SSU). Mature yeast 74S mitochondrial ribosomes consist of a small (37S) and a large (54S) subunit. The 37S small subunit contains a 15S ribosomal RNA (15S mt-rRNA) and at least 32 different proteins. The 54S large subunit contains a 21S rRNA (21S mt-rRNA) and at least 45 different proteins.

It localises to the mitochondrion. In terms of biological role, component of the mitochondrial ribosome (mitoribosome), a dedicated translation machinery responsible for the synthesis of mitochondrial genome-encoded proteins, including at least some of the essential transmembrane subunits of the mitochondrial respiratory chain. The mitoribosomes are attached to the mitochondrial inner membrane and translation products are cotranslationally integrated into the membrane. The polypeptide is Small ribosomal subunit protein bS18m (rsm18) (Schizosaccharomyces pombe (strain 972 / ATCC 24843) (Fission yeast)).